A 173-amino-acid chain; its full sequence is DELTA-actitoxin-Oor1b (173 aa).

The segment at 6–25 is N-terminal region; that stretch reads GAALGFNVHQTVLKALGQVS. Residues S49, V82, S100, P102, Y128, and Y133 each coordinate phosphocholine. The segment at 100-115 is trp-rich region, which is important for the binding to lipid membrane; the sequence is SVPFDYNLYSNWWDVK.

It belongs to the actinoporin family. Sea anemone subfamily. Octamer or nonamer in membranes. Monomer in the soluble state.

Its subcellular location is the secreted. It is found in the nematocyst. The protein resides in the target cell membrane. In terms of biological role, pore-forming protein that forms cations-selective hydrophilic pores of around 1 nm and causes cardiac stimulation and cytolysis. Pore formation is a multi-step process that involves specific recognition of membrane sphingomyelin (but neither cholesterol nor phosphatidylcholine) using aromatic rich region and adjacent phosphocholine (POC) binding site, firm binding to the membrane (mainly driven by hydrophobic interactions) accompanied by the transfer of the N-terminal region to the lipid-water interface and finally pore formation after oligomerization of monomers. Cytolytic effects include red blood cells hemolysis, platelet aggregation and lysis, cytotoxic and cytostatic effects on fibroblasts. Lethality in mammals has been ascribed to severe vasospasm of coronary vessels, cardiac arrhythmia, and inotropic effects. The protein is DELTA-actitoxin-Oor1b of Oulactis orientalis (Japan anemone).